Here is a 293-residue protein sequence, read N- to C-terminus: Small ribosomal subunit biogenesis GTPase RsgA 2 (293 aa).

In terms of domain architecture, CP-type G spans 63-223 (SNELVRPPIA…VADTPGFSVL (161 aa)). Residues 112–115 (TKVD) and 166–174 (GQSGVGKSS) contribute to the GTP site. Zn(2+) is bound by residues Cys247, Cys252, His254, and Cys260.

The protein belongs to the TRAFAC class YlqF/YawG GTPase family. RsgA subfamily. Monomer. Associates with 30S ribosomal subunit, binds 16S rRNA. The cofactor is Zn(2+).

It is found in the cytoplasm. Functionally, one of several proteins that assist in the late maturation steps of the functional core of the 30S ribosomal subunit. Helps release RbfA from mature subunits. May play a role in the assembly of ribosomal proteins into the subunit. Circularly permuted GTPase that catalyzes slow GTP hydrolysis, GTPase activity is stimulated by the 30S ribosomal subunit. The sequence is that of Small ribosomal subunit biogenesis GTPase RsgA 2 from Oceanobacillus iheyensis (strain DSM 14371 / CIP 107618 / JCM 11309 / KCTC 3954 / HTE831).